We begin with the raw amino-acid sequence, 396 residues long: Ribosomal RNA large subunit methyltransferase G (396 aa).

The protein belongs to the methyltransferase superfamily. RlmG family.

The protein localises to the cytoplasm. It carries out the reaction guanosine(1835) in 23S rRNA + S-adenosyl-L-methionine = N(2)-methylguanosine(1835) in 23S rRNA + S-adenosyl-L-homocysteine + H(+). In terms of biological role, specifically methylates the guanine in position 1835 (m2G1835) of 23S rRNA. This Yersinia enterocolitica serotype O:8 / biotype 1B (strain NCTC 13174 / 8081) protein is Ribosomal RNA large subunit methyltransferase G.